Reading from the N-terminus, the 205-residue chain is Holliday junction branch migration complex subunit RuvA (205 aa).

A domain I region spans residues 1–64 (MIGRLSGILV…EDAQLLYGFI (64 aa)). The segment at 65–143 (TKQERALFRL…SLLEASAGSE (79 aa)) is domain II. A flexible linker region spans residues 144-156 (REFMLQSNYTPAA). The segment at 157–205 (AVDSAEEDAISALLSLGYKPAQASKSVSAAFKEGMSSETLIKAALKSML) is domain III.

The protein belongs to the RuvA family. Homotetramer. Forms an RuvA(8)-RuvB(12)-Holliday junction (HJ) complex. HJ DNA is sandwiched between 2 RuvA tetramers; dsDNA enters through RuvA and exits via RuvB. An RuvB hexamer assembles on each DNA strand where it exits the tetramer. Each RuvB hexamer is contacted by two RuvA subunits (via domain III) on 2 adjacent RuvB subunits; this complex drives branch migration. In the full resolvosome a probable DNA-RuvA(4)-RuvB(12)-RuvC(2) complex forms which resolves the HJ.

The protein localises to the cytoplasm. The RuvA-RuvB-RuvC complex processes Holliday junction (HJ) DNA during genetic recombination and DNA repair, while the RuvA-RuvB complex plays an important role in the rescue of blocked DNA replication forks via replication fork reversal (RFR). RuvA specifically binds to HJ cruciform DNA, conferring on it an open structure. The RuvB hexamer acts as an ATP-dependent pump, pulling dsDNA into and through the RuvAB complex. HJ branch migration allows RuvC to scan DNA until it finds its consensus sequence, where it cleaves and resolves the cruciform DNA. In Shewanella frigidimarina (strain NCIMB 400), this protein is Holliday junction branch migration complex subunit RuvA.